The following is a 399-amino-acid chain: Alpha-tubulin N-acetyltransferase (399 aa).

An N-acetyltransferase domain is found at 1-178 (MEFNFIINKL…NNFVVFDQYF (178 aa)). Acetyl-CoA is bound by residues 112 to 125 (FYVH…GYGK) and 148 to 157 (SPKLIAFLKK). Polar residues predominate over residues 183–193 (SSQNKQNQNTR). A disordered region spans residues 183-223 (SSQNKQNQNTRSYSQPYSDYSSQIPTNYPQQQQQQSNSKSY). Over residues 194-223 (SYSQPYSDYSSQIPTNYPQQQQQQSNSKSY) the composition is skewed to low complexity.

Belongs to the acetyltransferase ATAT1 family.

The catalysed reaction is L-lysyl-[alpha-tubulin] + acetyl-CoA = N(6)-acetyl-L-lysyl-[alpha-tubulin] + CoA + H(+). In terms of biological role, specifically acetylates 'Lys-40' in alpha-tubulin on the lumenal side of microtubules. Promotes microtubule destabilization and accelerates microtubule dynamics; this activity may be independent of acetylation activity. Acetylates alpha-tubulin with a slow enzymatic rate, due to a catalytic site that is not optimized for acetyl transfer. Enters the microtubule through each end and diffuses quickly throughout the lumen of microtubules. Acetylates only long/old microtubules because of its slow acetylation rate since it does not have time to act on dynamically unstable microtubules before the enzyme is released. The sequence is that of Alpha-tubulin N-acetyltransferase from Tetrahymena thermophila (strain SB210).